The sequence spans 70 residues: Peptide BmKn1 (70 aa).

Residues 1–23 (MKSQTFFLLFLVVLLLAISQSEA) form the signal peptide. Residue Phe-36 is modified to Phenylalanine amide. The propeptide occupies 40–70 (SMRDMDTMKYLYDPSLSAADLKTLQKLMENY).

This sequence belongs to the non-disulfide-bridged peptide (NDBP) superfamily. Short antimicrobial peptide (group 4) family. As to expression, expressed by the venom gland.

It localises to the secreted. Its subcellular location is the target cell membrane. In terms of biological role, antibacterial peptide. In Olivierus martensii (Manchurian scorpion), this protein is Peptide BmKn1.